A 191-amino-acid chain; its full sequence is MKIGVLALQGAVREHIHHIELSGHEGVAIKRIEQLEEIDGLILPGGESTTLRRLMNLYGFKEALQQSTLPMFGTCAGLIVMAKQISGEDGYLDKLDITVQRNSFGRQVDSFESELDVKGIAEDIEGVFIRAPHIEATHGDVDVLSTVGDKIVAVQEGRYLGVSFHPELTDDYRVTQYFIEAIVKPTLTEKV.

46-48 (GES) lines the L-glutamine pocket. The active-site Nucleophile is the Cys75. Residues Arg101 and 129 to 130 (IR) contribute to the L-glutamine site. Active-site charge relay system residues include His165 and Glu167.

It belongs to the glutaminase PdxT/SNO family. In terms of assembly, in the presence of PdxS, forms a dodecamer of heterodimers. Only shows activity in the heterodimer.

The catalysed reaction is aldehydo-D-ribose 5-phosphate + D-glyceraldehyde 3-phosphate + L-glutamine = pyridoxal 5'-phosphate + L-glutamate + phosphate + 3 H2O + H(+). The enzyme catalyses L-glutamine + H2O = L-glutamate + NH4(+). It participates in cofactor biosynthesis; pyridoxal 5'-phosphate biosynthesis. Its function is as follows. Catalyzes the hydrolysis of glutamine to glutamate and ammonia as part of the biosynthesis of pyridoxal 5'-phosphate. The resulting ammonia molecule is channeled to the active site of PdxS. The sequence is that of Pyridoxal 5'-phosphate synthase subunit PdxT from Staphylococcus saprophyticus subsp. saprophyticus (strain ATCC 15305 / DSM 20229 / NCIMB 8711 / NCTC 7292 / S-41).